A 28-amino-acid chain; its full sequence is Short cationic peptide-1c (28 aa).

E28 is modified (glutamic acid 1-amide).

In terms of tissue distribution, expressed by the venom gland.

Its subcellular location is the secreted. In Cupiennius salei (American wandering spider), this protein is Short cationic peptide-1c.